A 314-amino-acid chain; its full sequence is Putative 4-hydroxy-2-oxoglutarate aldolase, mitochondrial (314 aa).

A substrate-binding site is contributed by 50–51 (TN). Lys-171 (schiff-base intermediate with substrate) is an active-site residue.

This sequence belongs to the DapA family.

The catalysed reaction is (4S)-4-hydroxy-2-oxoglutarate = glyoxylate + pyruvate. It carries out the reaction (4R)-4-hydroxy-2-oxoglutarate = glyoxylate + pyruvate. May catalyze the final step in the metabolic pathway of hydroxyproline. The sequence is that of Putative 4-hydroxy-2-oxoglutarate aldolase, mitochondrial from Coccidioides immitis (strain RS) (Valley fever fungus).